The chain runs to 46 residues: Major cold-shock protein (46 aa).

Residues 1-46 (EKGFGFISPADGSKDVFVHFSAIQSTSFKTLDEGQRVEFTIEQGQK) form the CSD domain.

As to quaternary structure, homodimer.

It localises to the cytoplasm. This chain is Major cold-shock protein (cspA), found in Aeromonas salmonicida.